A 450-amino-acid polypeptide reads, in one-letter code: Regulator of sigma-E protease RseP (450 aa).

A helical membrane pass occupies residues 1–21; it reads MLSFLWDLASFIVALGVLITV. Histidine 22 contributes to the Zn(2+) binding site. Over 22–103 the chain is Periplasmic; the sequence is HEFGHFWVAR…VGQRAAIIAA (82 aa). The active site involves glutamate 23. Residue histidine 26 coordinates Zn(2+). A helical transmembrane segment spans residues 104–124; sequence GPVANFIFAIFAYWLVFIIGV. Over 125-375 the chain is Cytoplasmic; it reads PGVRPVVGEI…KGAGMTAELG (251 aa). PDZ domains lie at 127–220 and 222–309; these read VRPV…PRGP and IEPV…PKVI. The helical transmembrane segment at 376–396 threads the bilayer; the sequence is VVYYLPFLALISVNLGIINLF. Residues 397 to 429 lie on the Periplasmic side of the membrane; sequence PLPVLDGGHLLFLAIEKIKGGPVSERVQDFCYR. Residues 430–450 traverse the membrane as a helical segment; it reads IGSILLVLLMGLALFNDFSRL.

The protein belongs to the peptidase M50B family. In terms of assembly, interacts with RseA; the third transmembrane domain can be cross-linked to the transmembrane domain of RseA. Requires Zn(2+) as cofactor.

Its subcellular location is the cell inner membrane. Its activity is regulated as follows. Inhibited by Zn(2+) chelator 1,10-phenanthroline. In terms of biological role, a site-2 regulated intramembrane protease (S2P) that cleaves the peptide bond between 'Ala-108' and 'Cys-109' in the transmembrane region of RseA. Part of a regulated intramembrane proteolysis (RIP) cascade. Acts on DegS-cleaved RseA to release the cytoplasmic domain of RseA, residue 'Val-148' of RseA may be required for this. This provides the cell with sigma-E (RpoE) activity through the proteolysis of RseA. Can also cleave sequences in transmembrane regions of other proteins (such as LacY) as well as liberated signal peptides of beta-lactamase, OmpF, LivK, SecM, PhoA, LivJ, OmpC, Lpp and TorA, probably within the membrane. Cleaves FecR within its transmembrane region to release an N-terminal cytoplasmic fragment which binds to sigma factor FecI, allowing it to activate transcription of the fecABCDE operon which mediates ferric citrate transport. The protein is Regulator of sigma-E protease RseP (rseP) of Escherichia coli (strain K12).